We begin with the raw amino-acid sequence, 172 residues long: C-phycocyanin beta subunit (172 aa).

Asparagine 72 bears the N4-methylasparagine mark. Cysteine 82 and cysteine 153 together coordinate (2R,3E)-phycocyanobilin.

This sequence belongs to the phycobiliprotein family. In terms of assembly, heterodimer of an alpha and a beta subunit, which further assembles into trimers and the trimers into hexamers. Post-translationally, contains two covalently linked bilin chromophores.

It is found in the cellular thylakoid membrane. Functionally, light-harvesting photosynthetic bile pigment-protein from the phycobiliprotein complex (phycobilisome, PBS). Phycocyanin is the major phycobiliprotein in the PBS rod. The sequence is that of C-phycocyanin beta subunit (cpcB) from Synechocystis sp. (strain PCC 6701).